The following is a 263-amino-acid chain: MKLKSFGVFGNPIKHSKSPLIHNACFLTFQKELGFLGHYHPILLPLESRIKNEFLHLGLSGANVTLPFKERAFQICDKIKGIALECGAVNTLVLEDDELVGYNTDALGFWLSLGGEDYQSALILGSGGSAKALACELKKQGLKVSVLNRSSRGLDFFQRLGCDCFMDPPKSAFDLIINATSASLNHELPLNKEVLKGYFKEGQLAYDLAYGFLTPFLSLAKELETPFQDGKGMLIYQASLSFEKFSASQIPYPKVFEVMRSVF.

Residues serine 16–serine 18 and threonine 65 contribute to the shikimate site. Lysine 69 serves as the catalytic Proton acceptor. Positions 90 and 105 each coordinate shikimate. Residues glycine 125 to serine 129 and leucine 208 contribute to the NADP(+) site. Residue tyrosine 210 participates in shikimate binding. Glycine 230 is an NADP(+) binding site.

Belongs to the shikimate dehydrogenase family. As to quaternary structure, homodimer.

The enzyme catalyses shikimate + NADP(+) = 3-dehydroshikimate + NADPH + H(+). It participates in metabolic intermediate biosynthesis; chorismate biosynthesis; chorismate from D-erythrose 4-phosphate and phosphoenolpyruvate: step 4/7. Involved in the biosynthesis of the chorismate, which leads to the biosynthesis of aromatic amino acids. Catalyzes the reversible NADPH linked reduction of 3-dehydroshikimate (DHSA) to yield shikimate (SA). This is Shikimate dehydrogenase (NADP(+)) from Helicobacter pylori (strain G27).